The chain runs to 472 residues: uncharacterized protein (472 aa).

It belongs to the AllG family.

This is an uncharacterized protein from Escherichia coli (strain K12).